Here is a 305-residue protein sequence, read N- to C-terminus: Tyrosine recombinase XerC (305 aa).

Residues 1–93 (MVLDGFAAHF…SWRQYCVWLV (93 aa)) form the Core-binding (CB) domain. The region spanning 114-294 (RVPKALPQEW…DFDHIARLYD (181 aa)) is the Tyr recombinase domain. Residues Arg-155, Lys-179, His-246, Arg-249, and His-272 contribute to the active site. Tyr-281 serves as the catalytic O-(3'-phospho-DNA)-tyrosine intermediate.

It belongs to the 'phage' integrase family. XerC subfamily. Forms a cyclic heterotetrameric complex composed of two molecules of XerC and two molecules of XerD.

Its subcellular location is the cytoplasm. In terms of biological role, site-specific tyrosine recombinase, which acts by catalyzing the cutting and rejoining of the recombining DNA molecules. The XerC-XerD complex is essential to convert dimers of the bacterial chromosome into monomers to permit their segregation at cell division. It also contributes to the segregational stability of plasmids. The polypeptide is Tyrosine recombinase XerC (Neisseria meningitidis serogroup C / serotype 2a (strain ATCC 700532 / DSM 15464 / FAM18)).